Here is a 131-residue protein sequence, read N- to C-terminus: DNA-directed RNA polymerase subunit Rpo8 (131 aa).

This sequence belongs to the archaeal Rpo8 RNA polymerase subunit family. Part of the 13-subunit RNA polymerase complex. Interacts with Rpo1N on the periphery of the clamp head.

It localises to the cytoplasm. The enzyme catalyses RNA(n) + a ribonucleoside 5'-triphosphate = RNA(n+1) + diphosphate. Its function is as follows. DNA-dependent RNA polymerase (RNAP) catalyzes the transcription of DNA into RNA using the four ribonucleoside triphosphates as substrates. This is DNA-directed RNA polymerase subunit Rpo8 from Saccharolobus shibatae (strain ATCC 51178 / DSM 5389 / JCM 8931 / NBRC 15437 / B12) (Sulfolobus shibatae).